A 364-amino-acid polypeptide reads, in one-letter code: Chorismate synthase (364 aa).

Residues Arg48 and Arg54 each coordinate NADP(+). Residues 125–127, 238–239, Gly278, 293–297, and Arg319 each bind FMN; these read RSS, NA, and KPTSS.

Belongs to the chorismate synthase family. Homotetramer. FMNH2 serves as cofactor.

The catalysed reaction is 5-O-(1-carboxyvinyl)-3-phosphoshikimate = chorismate + phosphate. It functions in the pathway metabolic intermediate biosynthesis; chorismate biosynthesis; chorismate from D-erythrose 4-phosphate and phosphoenolpyruvate: step 7/7. Catalyzes the anti-1,4-elimination of the C-3 phosphate and the C-6 proR hydrogen from 5-enolpyruvylshikimate-3-phosphate (EPSP) to yield chorismate, which is the branch point compound that serves as the starting substrate for the three terminal pathways of aromatic amino acid biosynthesis. This reaction introduces a second double bond into the aromatic ring system. The sequence is that of Chorismate synthase from Shewanella sediminis (strain HAW-EB3).